A 638-amino-acid chain; its full sequence is Chaperone protein HtpG (638 aa).

The a; substrate-binding stretch occupies residues 1–328 (MGDVEELKFS…SSDLPLNISR (328 aa)). A b region spans residues 329 to 558 (ETLQNNMVIE…EHALDIRMER (230 aa)). Residues 484–508 (LEKFTEGDDQQSTKKKKEKKDTDDA) are disordered. A c region spans residues 559–638 (FLREQKQLSY…NQVLARLFKK (80 aa)).

This sequence belongs to the heat shock protein 90 family. As to quaternary structure, homodimer.

It localises to the cytoplasm. In terms of biological role, molecular chaperone. Has ATPase activity. This is Chaperone protein HtpG from Anaplasma marginale (strain St. Maries).